The primary structure comprises 204 residues: Guanylate kinase (204 aa).

Residues 16–196 form the Guanylate kinase-like domain; that stretch reads AKVIIFSAPS…AKAHALKVIK (181 aa). Position 23 to 30 (23 to 30) interacts with ATP; it reads APSGSGKS.

This sequence belongs to the guanylate kinase family.

It localises to the cytoplasm. It catalyses the reaction GMP + ATP = GDP + ADP. Essential for recycling GMP and indirectly, cGMP. The chain is Guanylate kinase from Bacteroides fragilis (strain ATCC 25285 / DSM 2151 / CCUG 4856 / JCM 11019 / LMG 10263 / NCTC 9343 / Onslow / VPI 2553 / EN-2).